The chain runs to 115 residues: MKKAYRLKSRLAFQSVYAQGRSVANRAAVVHVLKQQAGTPTRVGFAAGRKLGKAVVRNRAKRRLREAVRLLWPRVRQGYYIVVIARQAALDMPFPELRQKVEELFERAGLLQREG.

Belongs to the RnpA family. In terms of assembly, consists of a catalytic RNA component (M1 or rnpB) and a protein subunit.

It catalyses the reaction Endonucleolytic cleavage of RNA, removing 5'-extranucleotides from tRNA precursor.. RNaseP catalyzes the removal of the 5'-leader sequence from pre-tRNA to produce the mature 5'-terminus. It can also cleave other RNA substrates such as 4.5S RNA. The protein component plays an auxiliary but essential role in vivo by binding to the 5'-leader sequence and broadening the substrate specificity of the ribozyme. The sequence is that of Ribonuclease P protein component from Symbiobacterium thermophilum (strain DSM 24528 / JCM 14929 / IAM 14863 / T).